The chain runs to 195 residues: Large ribosomal subunit protein bL25 (195 aa).

This sequence belongs to the bacterial ribosomal protein bL25 family. CTC subfamily. Part of the 50S ribosomal subunit; part of the 5S rRNA/L5/L18/L25 subcomplex. Contacts the 5S rRNA. Binds to the 5S rRNA independently of L5 and L18.

In terms of biological role, this is one of the proteins that binds to the 5S RNA in the ribosome where it forms part of the central protuberance. The sequence is that of Large ribosomal subunit protein bL25 from Chlorobium chlorochromatii (strain CaD3).